The following is a 414-amino-acid chain: Serine/threonine transporter SstT (414 aa).

Residues 2-15 (TTQRSPGLFRRLAH) are Cytoplasmic-facing. Residues 16–36 (GSLVKQILVGLVLGILLAWIS) form a helical membrane-spanning segment. Residues 37–45 (KPAAEAVGL) lie on the Periplasmic side of the membrane. Residues 46 to 66 (LGTLFVGALKAVAPILVLMLV) form a helical membrane-spanning segment. The Cytoplasmic portion of the chain corresponds to 67–83 (MASIANHQHGQKTNILP). Residues 84 to 104 (ILFLYLLGTFSAALAAVVFSF) form a helical membrane-spanning segment. The Periplasmic portion of the chain corresponds to 105–142 (AFPSTLHLSSSAGDISPPSGIVEVMRGLVMSMVSNPID). A helical transmembrane segment spans residues 143-163 (ALLKGNYIGILVWAIGLGFAL). At 164–179 (RHGNETTKNLVNDMSN) the chain is on the cytoplasmic side. A helical membrane pass occupies residues 180–200 (AVTFMVKLVIRFAPIGIFGLV). At 201–217 (SSTLATTGFSTLWGYAQ) the chain is on the periplasmic side. The chain crosses the membrane as a helical span at residues 218-238 (LLVVLVGCMLLVALVVNPLLV). Residues 239 to 299 (WWKIRRNPFP…VSIPLGATIN (61 aa)) lie on the Cytoplasmic side of the membrane. Residues 300 to 320 (MAGAAITITVLTLAAVNTLGI) form a helical membrane-spanning segment. Residues 321-331 (PVDLPTALLLS) are Periplasmic-facing. The helical transmembrane segment at 332 to 352 (VVASLCACGASGVAGGSLLLI) threads the bilayer. The Cytoplasmic segment spans residues 353–414 (PLACNMFGIS…DRLANSALRN (62 aa)).

This sequence belongs to the dicarboxylate/amino acid:cation symporter (DAACS) (TC 2.A.23) family.

The protein resides in the cell inner membrane. The enzyme catalyses L-serine(in) + Na(+)(in) = L-serine(out) + Na(+)(out). It carries out the reaction L-threonine(in) + Na(+)(in) = L-threonine(out) + Na(+)(out). Functionally, involved in the import of serine and threonine into the cell, with the concomitant import of sodium (symport system). This chain is Serine/threonine transporter SstT, found in Shigella dysenteriae serotype 1 (strain Sd197).